Consider the following 602-residue polypeptide: RecBCD enzyme subunit RecD (602 aa).

Position 171 to 178 (Gly171 to Thr178) interacts with ATP.

The protein belongs to the RecD family. Heterotrimer of RecB, RecC and RecD. All subunits contribute to DNA-binding.

It carries out the reaction Couples ATP hydrolysis with the unwinding of duplex DNA at the replication fork by translocating in the 5'-3' direction. This creates two antiparallel DNA single strands (ssDNA). The leading ssDNA polymer is the template for DNA polymerase III holoenzyme which synthesizes a continuous strand.. The catalysed reaction is ATP + H2O = ADP + phosphate + H(+). In terms of biological role, a helicase/nuclease that prepares dsDNA breaks (DSB) for recombinational DNA repair. Binds to DSBs and unwinds DNA via a highly rapid and processive ATP-dependent bidirectional helicase activity. Unwinds dsDNA until it encounters a Chi (crossover hotspot instigator) sequence from the 3' direction. Cuts ssDNA a few nucleotides 3' to the Chi site. The properties and activities of the enzyme are changed at Chi. The Chi-altered holoenzyme produces a long 3'-ssDNA overhang and facilitates RecA-binding to the ssDNA for homologous DNA recombination and repair. Holoenzyme degrades any linearized DNA that is unable to undergo homologous recombination. In the holoenzyme this subunit has ssDNA-dependent ATPase and 5'-3' helicase activity. When added to pre-assembled RecBC greatly stimulates nuclease activity and augments holoenzyme processivity. Negatively regulates the RecA-loading ability of RecBCD. This Buchnera aphidicola subsp. Acyrthosiphon pisum (strain APS) (Acyrthosiphon pisum symbiotic bacterium) protein is RecBCD enzyme subunit RecD.